A 302-amino-acid polypeptide reads, in one-letter code: Taste receptor type 2 member 104 (302 aa).

Topologically, residues 1–7 are extracellular; the sequence is MLSALES. Residues 8–28 traverse the membrane as a helical segment; it reads ILLSVATSEAMLGVLGNTFIV. The Cytoplasmic segment spans residues 29–43; it reads LVNYTDWVRNKKLSK. The chain crosses the membrane as a helical span at residues 44 to 64; it reads INFILTGLAISRIFTIWIITL. Residues 65-87 are Extracellular-facing; sequence DAYTKVFLLTMLMPSSLHECMSY. The helical transmembrane segment at 88–108 threads the bilayer; sequence IWVIINHLSVWFSTSLGIFYF. The Cytoplasmic segment spans residues 109 to 128; sequence LKIANFSHYIFLWMKRRADK. Residues 129–149 traverse the membrane as a helical segment; it reads VFVFLIVFLIITWLASFPLAV. The Extracellular portion of the chain corresponds to 150-182; it reads KVIKDVKIYQSNTSWLIHLEKSELLINYVFANM. Asn161 carries N-linked (GlcNAc...) asparagine glycosylation. Residues 183 to 203 traverse the membrane as a helical segment; the sequence is GPISLFIVAIIACFLLTISLW. The Cytoplasmic portion of the chain corresponds to 204–229; it reads RHSRQMQSIGSGFRDLNTEAHMKAMK. The chain crosses the membrane as a helical span at residues 230–250; that stretch reads VLIAFIILFILYFLGILIETL. The Extracellular segment spans residues 251–259; the sequence is CLFLTNNKL. A helical membrane pass occupies residues 260 to 280; the sequence is LFIFGFTLSAMYPCCHSFILI. The Cytoplasmic segment spans residues 281-302; it reads LTSRELKQATMRALQRLKCCET.

Belongs to the G-protein coupled receptor T2R family.

The protein localises to the membrane. Its function is as follows. Putative taste receptor which may play a role in the perception of bitterness. This is Taste receptor type 2 member 104 from Mus musculus (Mouse).